The primary structure comprises 740 residues: MLKLFSAFRKNKIWDFNGGIHPPEMKTQSNGTPLRQVPLAQRFVIPLKQHIGAEGELCVSVGDKVLRGQPLTRGRGKMLPVHAPTSGTVTAIAPHSTAHPSALAELSVIIDADGEDCWIPRDGWADYRTRSREELIERIHQFGVAGLGGAGFPTGVKLQGGGDKIETLIINAAECEPYITADDRLMQDCAAQVVEGIRILAHILQPREILIGIEDNKPQAISMLRAVLADSNDISLRVIPTKYPSGGAKQLTYILTGKQVPHGGRSSDIGVLMQNVGTAYAVKRAVIDGEPITERVVTLTGEAIARPGNVWARLGTPVRHLLNDAGFCPSADQMVIMGGPLMGFTLPWLDVPVVKITNCLLAPSANELGEPQEEQSCIRCSACADACPADLLPQQLYWFSKGQQHDKATTHNIADCIECGACAWVCPSNIPLVQYFRQEKAEIAAIRQEEKRAAEAKARFEARQARLEREKAARLERHKSAAVQPAAKDKDAIAAALARVKEKQAQATQPIVIKAGERPDNSAIIAAREARKAQARAKQAELQQTNDAATVADPRKTAVEAAIARAKARKLEQQQANAEPEQQVDPRKAAVEAAIARAKARKLEQQQANAKPEEQVDPRKAAVEAAIARAKARKLEQQQANAEPEEQVDPRKAAVEAAIARAKARKLEQQQANAEPEEQVDPRKAAVEAAIARAKARKLEQQQTNAEPEEQVDPRKAAVAAAIARAQAKKAAQQKVVNED.

4Fe-4S ferredoxin-type domains lie at 369–397 (GEPQ…QQLY) and 407–436 (KATT…VQYF). The [4Fe-4S] cluster site is built by Cys377, Cys380, Cys383, Cys387, Cys416, Cys419, Cys422, and Cys426. Disordered stretches follow at residues 602 to 621 (KLEQ…PRKA) and 660 to 718 (ARAK…RKAA). The segment covering 611–621 (KPEEQVDPRKA) has biased composition (basic and acidic residues).

Belongs to the 4Fe4S bacterial-type ferredoxin family. RnfC subfamily. The complex is composed of six subunits: RsxA, RsxB, RsxC, RsxD, RsxE and RsxG. [4Fe-4S] cluster is required as a cofactor.

It localises to the cell inner membrane. Part of a membrane-bound complex that couples electron transfer with translocation of ions across the membrane. Required to maintain the reduced state of SoxR. The protein is Ion-translocating oxidoreductase complex subunit C of Escherichia coli O9:H4 (strain HS).